The chain runs to 228 residues: FAS1 domain-containing protein NCU02579 (228 aa).

Residues 1-18 (MRFTPYLVLAPTAAVAFA) form the signal peptide. The interval 50-74 (PAVGLGPAMPPSGAPQADGPANAGG) is disordered. The 149-residue stretch at 77 to 225 (SVMLSDVMGR…GEVWILKGVR (149 aa)) folds into the FAS1 domain.

Its subcellular location is the vacuole. This chain is FAS1 domain-containing protein NCU02579, found in Neurospora crassa (strain ATCC 24698 / 74-OR23-1A / CBS 708.71 / DSM 1257 / FGSC 987).